A 192-amino-acid polypeptide reads, in one-letter code: FAD-linked sulfhydryl oxidase erv2 (192 aa).

The Cytoplasmic portion of the chain corresponds to 1-8; the sequence is MILNRRIQ. The helical; Signal-anchor transmembrane segment at 9–29 threads the bilayer; sequence VILPTLLILSFIIWIFHSVMV. The Lumenal portion of the chain corresponds to 30-192; that stretch reads DKDWRLFMPE…VINEDHDYSG (163 aa). Residues 61–162 form the ERV/ALR sulfhydryl oxidase domain; that stretch reads HDNNTNNLMV…TSCDGFNERY (102 aa). Residues tryptophan 74, cysteine 138, histidine 141, asparagine 145, and tyrosine 162 each contribute to the FAD site. Cysteines 138 and 155 form a disulfide.

It depends on FAD as a cofactor.

The protein localises to the endoplasmic reticulum membrane. It localises to the cytoplasm. Its subcellular location is the nucleus. It carries out the reaction 2 R'C(R)SH + O2 = R'C(R)S-S(R)CR' + H2O2. Functionally, FAD-dependent sulfhydryl oxidase that catalyzes disulfide bond formation in the endoplasmic reticulum lumen. The chain is FAD-linked sulfhydryl oxidase erv2 (erv2) from Schizosaccharomyces pombe (strain 972 / ATCC 24843) (Fission yeast).